Here is a 214-residue protein sequence, read N- to C-terminus: NADH-quinone oxidoreductase subunit C (214 aa).

Belongs to the complex I 30 kDa subunit family. In terms of assembly, NDH-1 is composed of 14 different subunits. Subunits NuoB, C, D, E, F, and G constitute the peripheral sector of the complex.

The protein localises to the cell inner membrane. It carries out the reaction a quinone + NADH + 5 H(+)(in) = a quinol + NAD(+) + 4 H(+)(out). In terms of biological role, NDH-1 shuttles electrons from NADH, via FMN and iron-sulfur (Fe-S) centers, to quinones in the respiratory chain. The immediate electron acceptor for the enzyme in this species is believed to be ubiquinone. Couples the redox reaction to proton translocation (for every two electrons transferred, four hydrogen ions are translocated across the cytoplasmic membrane), and thus conserves the redox energy in a proton gradient. The protein is NADH-quinone oxidoreductase subunit C of Francisella tularensis subsp. tularensis (strain WY96-3418).